A 149-amino-acid polypeptide reads, in one-letter code: Transcriptional repressor NrdR (149 aa).

A zinc finger spans residues 3-34; it reads CPFCFAVDTKVIDSRLVGEGSSVRRRRQCLVC. An ATP-cone domain is found at 49 to 139; the sequence is PRVVKSNDVR…VYRSFEDIKE (91 aa).

The protein belongs to the NrdR family. It depends on Zn(2+) as a cofactor.

Functionally, negatively regulates transcription of bacterial ribonucleotide reductase nrd genes and operons by binding to NrdR-boxes. This is Transcriptional repressor NrdR from Klebsiella pneumoniae (strain 342).